A 100-amino-acid polypeptide reads, in one-letter code: Osteocalcin (100 aa).

Positions 1-23 (MRALTLLALLALAALCIAGQAGA) are cleaved as a signal peptide. A propeptide spanning residues 24 to 51 (KPSGAESSKGAAFVSKQEGSEVVKRPRR) is cleaved from the precursor. The Gla domain occupies 52 to 98 (YLYQWLGAPVPYPDTLEPRREVCELNPDCDELADHIGFQEAYRRFYG). 4 residues coordinate Ca(2+): glutamate 68, glutamate 72, glutamate 75, and aspartate 81. Residues glutamate 68, glutamate 72, and glutamate 75 each carry the 4-carboxyglutamate modification. A disulfide bond links cysteine 74 and cysteine 80.

The protein belongs to the osteocalcin/matrix Gla protein family. In terms of processing, gamma-carboxyglutamate residues are formed by vitamin K dependent carboxylation by GGCX. These residues are essential for the binding of calcium. Decarboxylation promotes the hormone activity.

It is found in the secreted. The carboxylated form is one of the main organic components of the bone matrix, which constitutes 1-2% of the total bone protein: it acts as a negative regulator of bone formation and is required to limit bone formation without impairing bone resorption or mineralization. The carboxylated form binds strongly to apatite and calcium. Functionally, the uncarboxylated form acts as a hormone secreted by osteoblasts, which regulates different cellular processes, such as energy metabolism, male fertility and brain development. Regulates of energy metabolism by acting as a hormone favoring pancreatic beta-cell proliferation, insulin secretion and sensitivity and energy expenditure. Uncarboxylated osteocalcin hormone also promotes testosterone production in the testes: acts as a ligand for G protein-coupled receptor GPRC6A at the surface of Leydig cells, initiating a signaling response that promotes the expression of enzymes required for testosterone synthesis in a CREB-dependent manner. Also acts as a regulator of brain development: osteocalcin hormone crosses the blood-brain barrier and acts as a ligand for GPR158 on neurons, initiating a signaling response that prevents neuronal apoptosis in the hippocampus, favors the synthesis of all monoamine neurotransmitters and inhibits that of gamma-aminobutyric acid (GABA). Osteocalcin also crosses the placenta during pregnancy and maternal osteocalcin is required for fetal brain development. This is Osteocalcin from Pan troglodytes (Chimpanzee).